The chain runs to 1304 residues: Angiotensin-converting enzyme (1304 aa).

Positions 1 to 27 (MGAASGRRGPGLLLPLLLLLPPQPALA) are cleaved as a signal peptide. Residues 28 to 1257 (LDPGLQPGNF…LDAQQARVGQ (1230 aa)) are Extracellular-facing. N-linked (GlcNAc...) asparagine glycans are attached at residues N36, N52, N72, N109, N144, and N158. Peptidase M2 domains follow at residues 38-622 (SADE…LGWP) and 641-1220 (VTDE…LGWP). A disulfide bridge links C155 with C163. Y229 is a binding site for chloride. The N-linked (GlcNAc...) asparagine glycan is linked to N316. A disulfide bond links C357 and C375. H388 is a Zn(2+) binding site. The active-site Proton acceptor 1 is E389. Zn(2+)-binding residues include H392 and E416. N-linked (GlcNAc...) asparagine glycosylation is found at N440, N443, and N507. The Proton donor 1 role is filled by H518. Position 527 (R527) interacts with chloride. C543 and C555 are joined by a disulfide. Residue N675 is glycosylated (N-linked (GlcNAc...) asparagine). Residues N693 and N712 are each glycosylated (N-linked (GlcNAc...) (complex) asparagine). The cysteines at positions 755 and 761 are disulfide-linked. N758 carries an N-linked (GlcNAc...) asparagine glycan. Chloride-binding residues include R789 and Y827. A glycan (N-linked (GlcNAc...) asparagine) is linked at N940. C955 and C973 are disulfide-bonded. Residue H986 participates in Zn(2+) binding. E987 serves as the catalytic Proton acceptor 2. Residues H990 and E1014 each coordinate Zn(2+). Residues W1088 and R1092 each contribute to the chloride site. H1116 functions as the Proton donor 2 in the catalytic mechanism. R1125 contributes to the chloride binding site. A disulfide bridge links C1141 with C1153. An N-linked (GlcNAc...) asparagine glycan is attached at N1189. Positions 1213 to 1254 (HGEKLGWPQYNWTPNSARSEGPLPDSGRVSFLGLDLDAQQAR) are juxtamembrane stalk. The helical transmembrane segment at 1258–1274 (WLLLFLGIALLVATLGL) threads the bilayer. Residues 1275–1304 (SQRLFSIRHRSLHRHSHGPQFDSEVELRHS) lie on the Cytoplasmic side of the membrane. Phosphoserine is present on S1297.

It belongs to the peptidase M2 family. In terms of assembly, monomer and homodimer; homodimerizes following binding to an inhibitor. Interacts with calmodulin (CALM1, CALM2 or CALM3); interaction takes place in the cytoplasmic region and regulates phosphorylation and proteolytic cleavage. Zn(2+) serves as cofactor. Requires chloride as cofactor. Post-translationally, produced following proteolytic cleavage by secretase enzymes that cleave the transmembrane form in the juxtamembrane stalk region upstream of the transmembrane region. Cleavage can take place at different sites of the juxtamembrane stalk region. Phosphorylated by CK2 on Ser-1297; which allows membrane retention. Phosphorylated on tyrosine residues on its extracellular part, promoting cleavage by secretase enzymes and formation of the soluble form (Angiotensin-converting enzyme, soluble form).

It localises to the cell membrane. The protein localises to the cytoplasm. Its subcellular location is the secreted. It carries out the reaction Release of a C-terminal dipeptide, oligopeptide-|-Xaa-Yaa, when Xaa is not Pro, and Yaa is neither Asp nor Glu. Thus, conversion of angiotensin I to angiotensin II, with increase in vasoconstrictor activity, but no action on angiotensin II.. It catalyses the reaction angiotensin I + H2O = L-histidyl-L-leucine + angiotensin II. The catalysed reaction is bradykinin + H2O = L-Phe-L-Arg + bradykinin(1-7). The enzyme catalyses substance P + H2O = substance P(1-9) + L-Leu-L-Met-NH2. It carries out the reaction substance P + H2O = substance P(1-8) + Gly-L-Leu-L-Met-NH2. It catalyses the reaction substance P + H2O = L-Phe-L-Phe-Gly-L-Leu-L-Met-NH2 + substance P(1-6). The catalysed reaction is neurotensin + H2O = neurotensin(1-11) + L-isoleucyl-L-leucine. The enzyme catalyses goralatide + H2O = N-acetyl-L-seryl-L-aspartate + L-lysyl-L-proline. It carries out the reaction Met-enkephalin + H2O = L-phenylalanyl-L-methionine + L-tyrosylglycylglycine. It catalyses the reaction Leu-enkephalin + H2O = L-tyrosylglycylglycine + L-phenylalanyl-L-leucine. The catalysed reaction is Met-enkephalin-Arg-Phe + H2O = L-arginyl-L-phenylalanine + Met-enkephalin. Its activity is regulated as follows. The dipeptidyl carboxypeptidase activity is strongly activated by chloride. The dipeptidyl carboxypeptidase activity is specifically inhibited by lisinopril, captopril and enalaprilat. With respect to regulation, strongly inhibited by lisinopril and captopril. Its function is as follows. Dipeptidyl carboxypeptidase that removes dipeptides from the C-terminus of a variety of circulating hormones, such as angiotensin I, bradykinin or enkephalins, thereby playing a key role in the regulation of blood pressure, electrolyte homeostasis or synaptic plasticity. Composed of two similar catalytic domains, each possessing a functional active site, with different selectivity for substrates. Plays a major role in the angiotensin-renin system that regulates blood pressure and sodium retention by the kidney by converting angiotensin I to angiotensin II, resulting in an increase of the vasoconstrictor activity of angiotensin. Also able to inactivate bradykinin, a potent vasodilator, and therefore enhance the blood pressure response. Acts as a regulator of synaptic transmission by mediating cleavage of neuropeptide hormones, such as substance P, neurotensin or enkephalins. Catalyzes degradation of different enkephalin neuropeptides (Met-enkephalin, Leu-enkephalin, Met-enkephalin-Arg-Phe and possibly Met-enkephalin-Arg-Gly-Leu). Acts as a regulator of synaptic plasticity in the nucleus accumbens of the brain by mediating cleavage of Met-enkephalin-Arg-Phe, a strong ligand of Mu-type opioid receptor OPRM1, into Met-enkephalin. Met-enkephalin-Arg-Phe cleavage by ACE decreases activation of OPRM1, leading to long-term synaptic potentiation of glutamate release. Also acts as a regulator of hematopoietic stem cell differentiation by mediating degradation of hemoregulatory peptide N-acetyl-SDKP (AcSDKP). Acts as a regulator of cannabinoid signaling pathway by mediating degradation of hemopressin, an antagonist peptide of the cannabinoid receptor CNR1. Involved in amyloid-beta metabolism by catalyzing degradation of Amyloid-beta protein 40 and Amyloid-beta protein 42 peptides, thereby preventing plaque formation. Catalyzes cleavage of cholecystokinin (maturation of Cholecystokinin-8 and Cholecystokinin-5) and Gonadoliberin-1 (both maturation and degradation) hormones. Degradation of hemoregulatory peptide N-acetyl-SDKP (AcSDKP) and amyloid-beta proteins is mediated by the N-terminal catalytic domain, while angiotensin I and cholecystokinin cleavage is mediated by the C-terminal catalytic region. In terms of biological role, soluble form that is released in blood plasma and other body fluids following proteolytic cleavage in the juxtamembrane stalk region. Isoform produced by alternative promoter usage that is specifically expressed in spermatocytes and adult testis, and which is required for male fertility. In contrast to somatic isoforms, only contains one catalytic domain. Acts as a dipeptidyl carboxypeptidase that removes dipeptides from the C-terminus of substrates. The identity of substrates that are needed for male fertility is unknown. May also have a glycosidase activity which releases GPI-anchored proteins from the membrane by cleaving the mannose linkage in the GPI moiety. The GPIase activity was reported to be essential for the egg-binding ability of the sperm. This activity is however unclear and has been challenged by other groups, suggesting that it may be indirect. The chain is Angiotensin-converting enzyme from Pan troglodytes (Chimpanzee).